A 130-amino-acid chain; its full sequence is Histone H2A type 2-A (130 aa).

Residues 1–22 are disordered; that stretch reads MSGRGKQGGKARAKAKSRSSRA. Serine 2 carries the N-acetylserine modification. Serine 2 is subject to Phosphoserine; by RPS6KA5. A Citrulline; alternate modification is found at arginine 4. A Symmetric dimethylarginine; by PRMT5; alternate modification is found at arginine 4. 2 positions are modified to N6-(2-hydroxyisobutyryl)lysine; alternate: lysine 6 and lysine 10. An N6-(beta-hydroxybutyryl)lysine; alternate modification is found at lysine 6. Position 6 is an N6-acetyllysine; alternate (lysine 6). The segment covering 7–19 has biased composition (basic residues); sequence QGGKARAKAKSRS. Lysine 10 carries the N6-lactoyllysine; alternate modification. Lysine 10 carries the N6-succinyllysine; alternate modification. Glycyl lysine isopeptide (Lys-Gly) (interchain with G-Cter in ubiquitin) cross-links involve residues lysine 14 and lysine 16. Lysine 37 is subject to N6-(2-hydroxyisobutyryl)lysine; alternate. Lysine 37 is modified (N6-(beta-hydroxybutyryl)lysine; alternate). Lysine 37 is subject to N6-crotonyllysine; alternate. N6-(2-hydroxyisobutyryl)lysine occurs at positions 75 and 76. The residue at position 96 (lysine 96) is an N6-(2-hydroxyisobutyryl)lysine; alternate. Lysine 96 is subject to N6-succinyllysine; alternate. Residue lysine 96 is modified to N6-glutaryllysine; alternate. Lysine 100 bears the N6-glutaryllysine mark. Glutamine 105 is modified (N5-methylglutamine). Lysine 119 carries the post-translational modification N6-(2-hydroxyisobutyryl)lysine; alternate. 2 positions are modified to N6-crotonyllysine; alternate: lysine 119 and lysine 120. An N6-glutaryllysine; alternate mark is found at lysine 119 and lysine 120. The residue at position 120 (lysine 120) is an N6-(beta-hydroxybutyryl)lysine; alternate. A Glycyl lysine isopeptide (Lys-Gly) (interchain with G-Cter in ubiquitin); alternate cross-link involves residue lysine 120. A Phosphothreonine; by DCAF1 modification is found at threonine 121. The residue at position 126 (lysine 126) is an N6-(beta-hydroxybutyryl)lysine; alternate. Lysine 126 carries the post-translational modification N6-crotonyllysine; alternate. At lysine 126 the chain carries N6-glutaryllysine; alternate.

The protein belongs to the histone H2A family. In terms of assembly, the nucleosome is a histone octamer containing two molecules each of H2A, H2B, H3 and H4 assembled in one H3-H4 heterotetramer and two H2A-H2B heterodimers. The octamer wraps approximately 147 bp of DNA. In terms of processing, deiminated on Arg-4 in granulocytes upon calcium entry. Monoubiquitination of Lys-120 (H2AK119Ub) by RING1, TRIM37 and RNF2/RING2 complex gives a specific tag for epigenetic transcriptional repression and participates in X chromosome inactivation of female mammals. It is involved in the initiation of both imprinted and random X inactivation. Ubiquitinated H2A is enriched in inactive X chromosome chromatin. Ubiquitination of H2A functions downstream of methylation of 'Lys-27' of histone H3 (H3K27me). H2AK119Ub by RNF2/RING2 can also be induced by ultraviolet and may be involved in DNA repair. Following DNA double-strand breaks (DSBs), it is ubiquitinated through 'Lys-63' linkage of ubiquitin moieties by the E2 ligase UBE2N and the E3 ligases RNF8 and RNF168, leading to the recruitment of repair proteins to sites of DNA damage. Ubiquitination at Lys-14 and Lys-16 (H2AK13Ub and H2AK15Ub, respectively) in response to DNA damage is initiated by RNF168 that mediates monoubiquitination at these 2 sites, and 'Lys-63'-linked ubiquitin are then conjugated to monoubiquitin; RNF8 is able to extend 'Lys-63'-linked ubiquitin chains in vitro. H2AK119Ub and ionizing radiation-induced 'Lys-63'-linked ubiquitination (H2AK13Ub and H2AK15Ub) are distinct events. Post-translationally, phosphorylation on Ser-2 (H2AS1ph) is enhanced during mitosis. Phosphorylation on Ser-2 by RPS6KA5/MSK1 directly represses transcription. Acetylation of H3 inhibits Ser-2 phosphorylation by RPS6KA5/MSK1. Phosphorylation at Thr-121 (H2AT120ph) by DCAF1 is present in the regulatory region of many tumor suppresor genes and down-regulates their transcription. In terms of processing, symmetric dimethylation on Arg-4 by the PRDM1/PRMT5 complex may play a crucial role in the germ-cell lineage. Glutamine methylation at Gln-105 (H2AQ104me) by FBL is specifically dedicated to polymerase I. It is present at 35S ribosomal DNA locus and impairs binding of the FACT complex. Post-translationally, crotonylation (Kcr) is specifically present in male germ cells and marks testis-specific genes in post-meiotic cells, including X-linked genes that escape sex chromosome inactivation in haploid cells. Crotonylation marks active promoters and enhancers and confers resistance to transcriptional repressors. It is also associated with post-meiotically activated genes on autosomes. In terms of processing, hydroxybutyrylation of histones is induced by starvation. Lactylated in macrophages by EP300/P300 by using lactoyl-CoA directly derived from endogenous or exogenous lactate, leading to stimulates gene transcription.

Its subcellular location is the nucleus. The protein localises to the chromosome. Core component of nucleosome. Nucleosomes wrap and compact DNA into chromatin, limiting DNA accessibility to the cellular machineries which require DNA as a template. Histones thereby play a central role in transcription regulation, DNA repair, DNA replication and chromosomal stability. DNA accessibility is regulated via a complex set of post-translational modifications of histones, also called histone code, and nucleosome remodeling. The sequence is that of Histone H2A type 2-A (Hist2h2aa1) from Mus musculus (Mouse).